The following is a 402-amino-acid chain: Tol-Pal system protein TolB (402 aa).

The N-terminal stretch at 1–17 is a signal peptide; the sequence is MKKIVAIFLVFLGSLWA.

This sequence belongs to the TolB family. In terms of assembly, the Tol-Pal system is composed of five core proteins: the inner membrane proteins TolA, TolQ and TolR, the periplasmic protein TolB and the outer membrane protein Pal. They form a network linking the inner and outer membranes and the peptidoglycan layer.

It localises to the periplasm. In terms of biological role, part of the Tol-Pal system, which plays a role in outer membrane invagination during cell division and is important for maintaining outer membrane integrity. The polypeptide is Tol-Pal system protein TolB (Campylobacter jejuni subsp. jejuni serotype O:2 (strain ATCC 700819 / NCTC 11168)).